The following is a 203-amino-acid chain: Large ribosomal subunit protein bL25 (203 aa).

It belongs to the bacterial ribosomal protein bL25 family. CTC subfamily. Part of the 50S ribosomal subunit; part of the 5S rRNA/L5/L18/L25 subcomplex. Contacts the 5S rRNA. Binds to the 5S rRNA independently of L5 and L18.

Functionally, this is one of the proteins that binds to the 5S RNA in the ribosome where it forms part of the central protuberance. In Wolbachia pipientis subsp. Culex pipiens (strain wPip), this protein is Large ribosomal subunit protein bL25.